Here is a 371-residue protein sequence, read N- to C-terminus: Cytochrome b (371 aa).

Transmembrane regions (helical) follow at residues 25–45, 69–90, 105–125, and 170–190; these read FGSM…FLAI, WIMQ…YIHI, WLSG…GYVL, and FFAL…IHII. The heme b site is built by His75 and His89. The heme b site is built by His174 and His188. His193 lines the a ubiquinone pocket. Helical transmembrane passes span 218-238, 280-300, 312-332, and 339-358; these read YKDT…LSFS, LGGT…PFTH, LAQM…WTAS, and FIII…IMNP.

This sequence belongs to the cytochrome b family. In terms of assembly, the cytochrome bc1 complex contains 3 respiratory subunits (MT-CYB, CYC1 and UQCRFS1), 2 core proteins (UQCRC1 and UQCRC2) and probably 6 low-molecular weight proteins. Requires heme b as cofactor.

The protein resides in the mitochondrion inner membrane. Component of the ubiquinol-cytochrome c reductase complex (complex III or cytochrome b-c1 complex) that is part of the mitochondrial respiratory chain. The b-c1 complex mediates electron transfer from ubiquinol to cytochrome c. Contributes to the generation of a proton gradient across the mitochondrial membrane that is then used for ATP synthesis. The polypeptide is Cytochrome b (MT-CYB) (Sinomicrurus kelloggi (Kellogg's coral snake)).